Reading from the N-terminus, the 464-residue chain is Trigger factor (464 aa).

The region spanning 169–256 (GDVAIVDYRG…MKELKAKELP (88 aa)) is the PPIase FKBP-type domain.

The protein belongs to the FKBP-type PPIase family. Tig subfamily.

It localises to the cytoplasm. It catalyses the reaction [protein]-peptidylproline (omega=180) = [protein]-peptidylproline (omega=0). Involved in protein export. Acts as a chaperone by maintaining the newly synthesized protein in an open conformation. Functions as a peptidyl-prolyl cis-trans isomerase. This is Trigger factor from Microcystis aeruginosa (strain NIES-843 / IAM M-2473).